The chain runs to 299 residues: Nitrogenase iron protein (299 aa).

8 to 15 provides a ligand contact to ATP; it reads GKGGIGKS. Cys96 serves as a coordination point for [4Fe-4S] cluster. Arg99 is modified (ADP-ribosylarginine; by dinitrogenase reductase ADP-ribosyltransferase). Cys130 lines the [4Fe-4S] cluster pocket.

This sequence belongs to the NifH/BchL/ChlL family. Homodimer. [4Fe-4S] cluster serves as cofactor. In terms of processing, the reversible ADP-ribosylation of Arg-99 inactivates the nitrogenase reductase and regulates nitrogenase activity.

It catalyses the reaction N2 + 8 reduced [2Fe-2S]-[ferredoxin] + 16 ATP + 16 H2O = H2 + 8 oxidized [2Fe-2S]-[ferredoxin] + 2 NH4(+) + 16 ADP + 16 phosphate + 6 H(+). Its function is as follows. The key enzymatic reactions in nitrogen fixation are catalyzed by the nitrogenase complex, which has 2 components: the iron protein and the molybdenum-iron protein. This is Nitrogenase iron protein from Gloeothece citriformis (strain PCC 7424) (Cyanothece sp. (strain PCC 7424)).